Here is a 125-residue protein sequence, read N- to C-terminus: Protein ELF4-LIKE 1 (125 aa).

Over residues 1–18 the composition is skewed to polar residues; the sequence is MEASRNRSLVGNNRSPEM. The segment at 1 to 28 is disordered; it reads MEASRNRSLVGNNRSPEMNENDGEDVAA.

It belongs to the EARLY FLOWERING 4 family. In terms of assembly, homodimer.

The protein localises to the nucleus. Its function is as follows. Component of the central CCA1/LHY-TOC1 feedback loop in the circadian clock that promotes clock accuracy and is required for sustained rhythms in the absence of daily light/dark cycles. In Arabidopsis thaliana (Mouse-ear cress), this protein is Protein ELF4-LIKE 1 (EFL1).